The sequence spans 207 residues: Probable molybdenum cofactor guanylyltransferase (207 aa).

Residues 9-11 (LAG), Lys21, and Asp97 contribute to the GTP site. Asp97 contributes to the Mg(2+) binding site.

This sequence belongs to the MobA family. Mg(2+) serves as cofactor.

It is found in the cytoplasm. It catalyses the reaction Mo-molybdopterin + GTP + H(+) = Mo-molybdopterin guanine dinucleotide + diphosphate. Transfers a GMP moiety from GTP to Mo-molybdopterin (Mo-MPT) cofactor (Moco or molybdenum cofactor) to form Mo-molybdopterin guanine dinucleotide (Mo-MGD) cofactor. The protein is Probable molybdenum cofactor guanylyltransferase of Trichormus variabilis (strain ATCC 29413 / PCC 7937) (Anabaena variabilis).